Reading from the N-terminus, the 287-residue chain is Elongation factor Ts (287 aa).

Positions 80–83 (TDFL) are involved in Mg(2+) ion dislocation from EF-Tu.

It belongs to the EF-Ts family.

The protein resides in the cytoplasm. Its function is as follows. Associates with the EF-Tu.GDP complex and induces the exchange of GDP to GTP. It remains bound to the aminoacyl-tRNA.EF-Tu.GTP complex up to the GTP hydrolysis stage on the ribosome. This chain is Elongation factor Ts, found in Pseudomonas putida (strain ATCC 700007 / DSM 6899 / JCM 31910 / BCRC 17059 / LMG 24140 / F1).